Here is a 395-residue protein sequence, read N- to C-terminus: Succinyl-diaminopimelate desuccinylase (395 aa).

H74 contributes to the Zn(2+) binding site. D76 is a catalytic residue. D107 lines the Zn(2+) pocket. E141 serves as the catalytic Proton acceptor. Residues E142, E170, and H368 each contribute to the Zn(2+) site.

This sequence belongs to the peptidase M20A family. DapE subfamily. Homodimer. It depends on Zn(2+) as a cofactor. The cofactor is Co(2+).

The catalysed reaction is N-succinyl-(2S,6S)-2,6-diaminopimelate + H2O = (2S,6S)-2,6-diaminopimelate + succinate. The protein operates within amino-acid biosynthesis; L-lysine biosynthesis via DAP pathway; LL-2,6-diaminopimelate from (S)-tetrahydrodipicolinate (succinylase route): step 3/3. Its function is as follows. Catalyzes the hydrolysis of N-succinyl-L,L-diaminopimelic acid (SDAP), forming succinate and LL-2,6-diaminopimelate (DAP), an intermediate involved in the bacterial biosynthesis of lysine and meso-diaminopimelic acid, an essential component of bacterial cell walls. This is Succinyl-diaminopimelate desuccinylase from Brucella abortus (strain S19).